A 377-amino-acid polypeptide reads, in one-letter code: Compound eye opsin BCRH1 (377 aa).

At methionine 1–tryptophan 53 the chain is on the extracellular side. Asparagine 3 carries an N-linked (GlcNAc...) asparagine glycan. Residues histidine 54 to leucine 78 form a helical membrane-spanning segment. The Cytoplasmic portion of the chain corresponds to tyrosine 79–asparagine 90. A helical transmembrane segment spans residues methionine 91–cysteine 115. At phenylalanine 116–tyrosine 131 the chain is on the extracellular side. Residues cysteine 128 and cysteine 205 are joined by a disulfide bond. The helical transmembrane segment at alanine 132–phenylalanine 151 threads the bilayer. Over aspartate 152–lysine 170 the chain is Cytoplasmic. A helical transmembrane segment spans residues alanine 171–glycine 194. Residues serine 195 to threonine 218 are Extracellular-facing. The helical transmembrane segment at tyrosine 219 to isoleucine 246 threads the bilayer. At phenylalanine 247–lysine 281 the chain is on the cytoplasmic side. A helical membrane pass occupies residues threonine 282–leucine 305. Over leucine 306–threonine 313 the chain is Extracellular. The chain crosses the membrane as a helical span at residues proline 314–serine 338. Lysine 325 carries the post-translational modification N6-(retinylidene)lysine. Topologically, residues histidine 339–serine 377 are cytoplasmic.

Belongs to the G-protein coupled receptor 1 family. Opsin subfamily. In terms of processing, phosphorylated on some or all of the serine and threonine residues present in the C-terminal region. Expressed in all of the seven retinular cells (R1-R7) forming the main rhabdom in each ommatidium.

Its subcellular location is the membrane. Functionally, visual pigments are the light-absorbing molecules that mediate vision. They consist of an apoprotein, opsin, covalently linked to cis-retinal. This opsin produces visual pigments with maximal absorption in the blue-green region of the spectrum. This is Compound eye opsin BCRH1 from Hemigrapsus sanguineus (Asian shore crab).